We begin with the raw amino-acid sequence, 251 residues long: 7-cyano-7-deazaguanine synthase (251 aa).

The segment at 1 to 21 is disordered; it reads MSDLPRHSPRRQHAGESAVTA. 35–45 contacts ATP; it reads YSGGMDSYTVL. The Zn(2+) site is built by C212, C220, C223, and C226.

It belongs to the QueC family. It depends on Zn(2+) as a cofactor.

It catalyses the reaction 7-carboxy-7-deazaguanine + NH4(+) + ATP = 7-cyano-7-deazaguanine + ADP + phosphate + H2O + H(+). The protein operates within purine metabolism; 7-cyano-7-deazaguanine biosynthesis. Its function is as follows. Catalyzes the ATP-dependent conversion of 7-carboxy-7-deazaguanine (CDG) to 7-cyano-7-deazaguanine (preQ(0)). The polypeptide is 7-cyano-7-deazaguanine synthase (Chromohalobacter salexigens (strain ATCC BAA-138 / DSM 3043 / CIP 106854 / NCIMB 13768 / 1H11)).